The following is a 703-amino-acid chain: MGFDNPRSERFEDDPEISKIPTTSGVKVKYHIDGTQIPEQSSKKSRKNETRNKFLKTRVLSRVFSEDYERVKKRVLVLDPRGQLIHRWNKIFLVACLVSLFVDPLFFYLPVVREEVCIDIGKTLEVILTVVRSFGDLFYIVQICMKFRTAYVAPSSKVFGRGELVLTYSKIALRYFSKGFWLDFIAALPLPQVLIWIIIPTLRGSTMANTKNVLRFFIIFQYIPRLYLIFPLSSQIVKATGVVTETAWAGAAYNLMLYMLASHILGACWYLLSIERQEACWKSVCNMEKSNCQYGFFNCHSIKDAPRVAWFIASNVTNLCSPNAGFYPFGIYADAMTSKVTSSPFFNKYFYCLWWGLRNLSSLGQGLLTSTFIGEIMVAIVVATLGLVLFALLIGNMQTYLQSITVRLEEWRVKRTDTEQWMHHRQLPPELRESIRKYNQYKWVATRGVEEEDLLKGLPLDLRREIKRHLCLELVRGVPLFDQMDERMLDAICERLKPALCTEGTYLVREGDPVNEMLFIIRGHLDSYTTNGGRDGFFNSCRIGPGDFCGEELLTWALDPRPSVILPSSTRTVKAFSEVEAFALIAEDLKFVASQFRRLHSKQLRHKFRFYSHQWRTWAACFIQAAWRRHKKRKEAAELRAKENLVAASEAENEIAKKYGKGFVVYGTRVARSTRKGVNMHSGTNSGVVSSLQKPTEPDFSDE.

The span at 1-10 shows a compositional bias: basic and acidic residues; sequence MGFDNPRSER. Positions 1–23 are disordered; the sequence is MGFDNPRSERFEDDPEISKIPTT. 5 helical membrane passes run 91–111, 179–199, 216–236, 255–275, and 372–392; these read IFLVACLVSLFVDPLFFYLPV, GFWLDFIAALPLPQVLIWIII, FFIIFQYIPRLYLIFPLSSQI, LMLYMLASHILGACWYLLSIE, and FIGEIMVAIVVATLGLVLFAL. An a nucleoside 3',5'-cyclic phosphate-binding site is contributed by 480–565; that stretch reads LFDQMDERML…WALDPRPSVI (86 aa). Residues 616–644 form the IQ domain; that stretch reads RTWAACFIQAAWRRHKKRKEAAELRAKEN. The interval 676–703 is disordered; that stretch reads KGVNMHSGTNSGVVSSLQKPTEPDFSDE. Positions 681-694 are enriched in polar residues; that stretch reads HSGTNSGVVSSLQK.

This sequence belongs to the cyclic nucleotide-gated cation channel (TC 1.A.1.5) family. As to quaternary structure, interacts (via N-terminus) with DMI1 (via c-terminus). The Nod factor has no effect on this interaction, implying that the complex is maintained after activation. As to expression, expressed in roots, stems, leaves, flowers and pods.

It localises to the nucleus membrane. Its function is as follows. Cyclic nucleotide-gated channel involved in the establishment of both rhizobial and mycorrhizal associations. Required for full activation of nuclear-localized Ca(2+) oscillations by Nod and Myc factors. Simultaneous activation of the K(+)-permeable channel DMI1 and the Ca(2+) channel CNGC15 can give rise to sustained Ca(2+) oscillations. May function during fertilization in both female and male gametophytic Ca(2+) signaling. This Medicago truncatula (Barrel medic) protein is Protein CNGC15c.